Reading from the N-terminus, the 305-residue chain is Oxygen-dependent coproporphyrinogen-III oxidase (305 aa).

Substrate is bound at residue Ser98. A divalent metal cation-binding residues include His102 and His112. Residue His112 is the Proton donor of the active site. 114 to 116 contributes to the substrate binding site; that stretch reads NVR. A divalent metal cation-binding residues include His151 and His181. The important for dimerization stretch occupies residues 246–281; sequence YVEFNLVYDRGTLFGLQSGGRTESILMSMPPLARWE. 264 to 266 is a binding site for substrate; it reads GGR.

This sequence belongs to the aerobic coproporphyrinogen-III oxidase family. Homodimer. A divalent metal cation serves as cofactor.

The protein localises to the cytoplasm. It catalyses the reaction coproporphyrinogen III + O2 + 2 H(+) = protoporphyrinogen IX + 2 CO2 + 2 H2O. Its pathway is porphyrin-containing compound metabolism; protoporphyrin-IX biosynthesis; protoporphyrinogen-IX from coproporphyrinogen-III (O2 route): step 1/1. In terms of biological role, involved in the heme biosynthesis. Catalyzes the aerobic oxidative decarboxylation of propionate groups of rings A and B of coproporphyrinogen-III to yield the vinyl groups in protoporphyrinogen-IX. The protein is Oxygen-dependent coproporphyrinogen-III oxidase of Vibrio parahaemolyticus serotype O3:K6 (strain RIMD 2210633).